A 602-amino-acid chain; its full sequence is Threonine--tRNA ligase (602 aa).

Positions 208-499 (DHRKLGTELK…LTEHCAGEFP (292 aa)) are catalytic. Zn(2+)-binding residues include C300, H351, and H476.

The protein belongs to the class-II aminoacyl-tRNA synthetase family. Homodimer. The cofactor is Zn(2+).

It localises to the cytoplasm. The enzyme catalyses tRNA(Thr) + L-threonine + ATP = L-threonyl-tRNA(Thr) + AMP + diphosphate + H(+). In terms of biological role, catalyzes the attachment of threonine to tRNA(Thr) in a two-step reaction: L-threonine is first activated by ATP to form Thr-AMP and then transferred to the acceptor end of tRNA(Thr). Also edits incorrectly charged L-seryl-tRNA(Thr). The chain is Threonine--tRNA ligase from Campylobacter jejuni (strain RM1221).